A 376-amino-acid chain; its full sequence is Fibromodulin (376 aa).

The signal sequence occupies residues 1-18 (MQWASILLLRGLCSLSQG). Gln19 is subject to Pyrrolidone carboxylic acid. 6 positions are modified to sulfotyrosine: Tyr20, Tyr38, Tyr53, Tyr55, Tyr63, and Tyr65. Residues 67–105 (APPPPEPRDCPQECDCPPNFPTAMYCDNRNLKYLPFVPS) form the LRRNT domain. LRR repeat units follow at residues 106-127 (RMKY…VFDN), 130-143 (GLLW…QITS), 156-176 (HLER…PLPR), 177-198 (SLRE…ALEG), 201-222 (NLTA…MRGL), 224-245 (SLIL…LPSA), 246-266 (LEQL…YFRG), and 269-289 (KLLY…ATNT). Asn127 carries an N-linked (GlcNAc...) (keratan sulfate) asparagine glycan. Asn166 carries an N-linked (GlcNAc...) (keratan sulfate) asparagine glycan. N-linked (GlcNAc...) (keratan sulfate) asparagine glycosylation occurs at Asn201. A glycan (N-linked (GlcNAc...) (keratan sulfate) asparagine) is linked at Asn291. 2 LRR repeats span residues 294-315 (SLLE…NTNL) and 316-335 (ENLY…SFCT). Residues Cys334 and Cys367 are joined by a disulfide bond. Asn341 is a glycosylation site (N-linked (GlcNAc...) asparagine). One copy of the LRR 11 repeat lies at 344 to 367 (KLQVLRLDGNEIKRSAMPVDAPLC).

The protein belongs to the small leucine-rich proteoglycan (SLRP) family. SLRP class II subfamily. In terms of assembly, binds to type I and type II collagen. Post-translationally, binds keratan sulfate chains.

It localises to the secreted. The protein resides in the extracellular space. It is found in the extracellular matrix. Affects the rate of fibrils formation. May have a primary role in collagen fibrillogenesis. In Rattus norvegicus (Rat), this protein is Fibromodulin (Fmod).